The chain runs to 562 residues: Catalase T (562 aa).

Active-site residues include H64 and N137. Y351 is a binding site for heme.

The protein belongs to the catalase family. As to quaternary structure, homotetramer. Heme serves as cofactor.

The protein localises to the cytoplasm. It carries out the reaction 2 H2O2 = O2 + 2 H2O. Its function is as follows. Occurs in almost all aerobically respiring organisms and serves to protect cells from the toxic effects of hydrogen peroxide. This is Catalase T (CTT1) from Saccharomyces cerevisiae (strain YJM789) (Baker's yeast).